A 152-amino-acid polypeptide reads, in one-letter code: Endoribonuclease YbeY (152 aa).

Positions 117, 121, and 127 each coordinate Zn(2+).

Belongs to the endoribonuclease YbeY family. Zn(2+) is required as a cofactor.

The protein localises to the cytoplasm. Functionally, single strand-specific metallo-endoribonuclease involved in late-stage 70S ribosome quality control and in maturation of the 3' terminus of the 16S rRNA. The protein is Endoribonuclease YbeY of Borreliella afzelii (strain PKo) (Borrelia afzelii).